Reading from the N-terminus, the 290-residue chain is Beta carbonic anhydrase 6, mitochondrial (290 aa).

A mitochondrion-targeting transit peptide spans 1–20 (MAFTLGGRARRLVSATSVHQ). Position 122 is a phosphoserine (S122). At C226 the chain carries S-nitrosocysteine.

This sequence belongs to the beta-class carbonic anhydrase family. Strongly expressed in aerial tissues including leaves, stems, flowers and siliques, and, to a lower extent, in roots. Accumulates in guard cells.

Its subcellular location is the mitochondrion. The enzyme catalyses hydrogencarbonate + H(+) = CO2 + H2O. In terms of biological role, reversible hydration of carbon dioxide. In Arabidopsis thaliana (Mouse-ear cress), this protein is Beta carbonic anhydrase 6, mitochondrial (BCA6).